Reading from the N-terminus, the 430-residue chain is Histidine--tRNA ligase (430 aa).

It belongs to the class-II aminoacyl-tRNA synthetase family. As to quaternary structure, homodimer.

It is found in the cytoplasm. It carries out the reaction tRNA(His) + L-histidine + ATP = L-histidyl-tRNA(His) + AMP + diphosphate + H(+). This Chlorobium limicola (strain DSM 245 / NBRC 103803 / 6330) protein is Histidine--tRNA ligase.